The sequence spans 435 residues: Cyclin-dependent kinase 15 (435 aa).

The 285-residue stretch at 103–387 (YLNLEKLGEG…AQEALVHDYF (285 aa)) folds into the Protein kinase domain. Residues 109-117 (LGEGSYATV) and lysine 132 each bind ATP. The Proton acceptor role is filled by aspartate 224.

This sequence belongs to the protein kinase superfamily. CMGC Ser/Thr protein kinase family. CDC2/CDKX subfamily. It depends on Mg(2+) as a cofactor.

The catalysed reaction is L-seryl-[protein] + ATP = O-phospho-L-seryl-[protein] + ADP + H(+). The enzyme catalyses L-threonyl-[protein] + ATP = O-phospho-L-threonyl-[protein] + ADP + H(+). Serine/threonine-protein kinase that acts like an antiapoptotic protein that counters TRAIL/TNFSF10-induced apoptosis by inducing phosphorylation of BIRC5 at 'Thr-34'. The sequence is that of Cyclin-dependent kinase 15 (CDK15) from Homo sapiens (Human).